The primary structure comprises 305 residues: uncharacterized protein (305 aa).

An ABC transporter domain is found at 5 to 233 (LELKNVTKNI…ENDTYFFQVE (229 aa)). 37–44 (GPNGAGKT) is a binding site for ATP.

The protein belongs to the ABC transporter superfamily.

This is an uncharacterized protein from Bacillus subtilis (strain 168).